Here is a 223-residue protein sequence, read N- to C-terminus: MIYKACIRKRCGGVCVGEELKPEKIQEIRLGDCPICGGKGTLKAIQFIHRIPYFGEVMESTVVCERCGYRNSDVIILEEREPRLYEVKVEEEKDLFIRVVRSKSGTIELEELGIKIEPGPAAEGFVSNIEGVLERAKEVLLMARDFKEQENDREAVRRIDELLKYIEEVKEGKKPLTVRIMDPFGNSALIGEKVKSRKLTKEEIRKLSKGPYIVIEPDEVPQQ.

The C4-type zinc finger occupies 33-67 (CPICGGKGTLKAIQFIHRIPYFGEVMESTVVCERC).

Belongs to the ZPR1 family.

This is an uncharacterized protein from Pyrococcus horikoshii (strain ATCC 700860 / DSM 12428 / JCM 9974 / NBRC 100139 / OT-3).